Reading from the N-terminus, the 448-residue chain is Glutamyl-tRNA reductase (448 aa).

Residues 48-51 (TCNR), serine 100, 105-107 (EDQ), and glutamine 111 contribute to the substrate site. Catalysis depends on cysteine 49, which acts as the Nucleophile. 180 to 185 (GAGEIG) contributes to the NADP(+) binding site.

It belongs to the glutamyl-tRNA reductase family. Homodimer.

It catalyses the reaction (S)-4-amino-5-oxopentanoate + tRNA(Glu) + NADP(+) = L-glutamyl-tRNA(Glu) + NADPH + H(+). It participates in porphyrin-containing compound metabolism; protoporphyrin-IX biosynthesis; 5-aminolevulinate from L-glutamyl-tRNA(Glu): step 1/2. Functionally, catalyzes the NADPH-dependent reduction of glutamyl-tRNA(Glu) to glutamate 1-semialdehyde (GSA). This chain is Glutamyl-tRNA reductase, found in Methanosarcina mazei (strain ATCC BAA-159 / DSM 3647 / Goe1 / Go1 / JCM 11833 / OCM 88) (Methanosarcina frisia).